Here is a 256-residue protein sequence, read N- to C-terminus: D-aminoacyl-tRNA deacylase (256 aa).

The protein belongs to the DtdA deacylase family. In terms of assembly, monomer. It depends on Zn(2+) as a cofactor.

It catalyses the reaction a D-aminoacyl-tRNA + H2O = a tRNA + a D-alpha-amino acid + H(+). The enzyme catalyses glycyl-tRNA(Ala) + H2O = tRNA(Ala) + glycine + H(+). D-aminoacyl-tRNA deacylase with broad substrate specificity. By recycling D-aminoacyl-tRNA to D-amino acids and free tRNA molecules, this enzyme counteracts the toxicity associated with the formation of D-aminoacyl-tRNA entities in vivo. This Thermoplasma volcanium (strain ATCC 51530 / DSM 4299 / JCM 9571 / NBRC 15438 / GSS1) protein is D-aminoacyl-tRNA deacylase.